The sequence spans 1207 residues: DNA-directed RNA polymerase subunit beta' (1207 aa).

Positions 60, 62, 75, and 78 each coordinate Zn(2+). Mg(2+) contacts are provided by aspartate 449, aspartate 451, and aspartate 453. Positions 822, 896, 903, and 906 each coordinate Zn(2+).

The protein belongs to the RNA polymerase beta' chain family. In terms of assembly, the RNAP catalytic core consists of 2 alpha, 1 beta, 1 beta' and 1 omega subunit. When a sigma factor is associated with the core the holoenzyme is formed, which can initiate transcription. The cofactor is Mg(2+). Requires Zn(2+) as cofactor.

It catalyses the reaction RNA(n) + a ribonucleoside 5'-triphosphate = RNA(n+1) + diphosphate. DNA-dependent RNA polymerase catalyzes the transcription of DNA into RNA using the four ribonucleoside triphosphates as substrates. This chain is DNA-directed RNA polymerase subunit beta', found in Staphylococcus aureus (strain MRSA252).